Here is a 1352-residue protein sequence, read N- to C-terminus: Astrotactin-2 (1352 aa).

Residues 1 to 31 form a disordered region; the sequence is MAAAGARRSPGRGLGLRGRPRLGFHPGPPPP. The first 51 residues, 1–51, serve as a signal peptide directing secretion; it reads MAAAGARRSPGRGLGLRGRPRLGFHPGPPPPPPPPLLLLFLLLLPPPPLLA. The Lumenal segment spans residues 52–218; it reads GATAAAASRE…IVEEQMHILH (167 aa). N180 carries N-linked (GlcNAc...) asparagine glycosylation. Residues 219 to 239 traverse the membrane as a helical segment; that stretch reads ISVMGGLIALLLLLLVFTVAL. The Cytoplasmic portion of the chain corresponds to 240–447; sequence YAQRRWQKRR…KGLLKSPVNK (208 aa). Disordered regions lie at residues 308-327 and 375-421; these read EEEE…DEFG and TPVE…ADDE. A compositionally biased stretch (polar residues) spans 383–392; sequence QPASRSSTSA. A helical transmembrane segment spans residues 448–468; the sequence is TALTLIAVSSCILAMVCGNQM. Over 469–1352 the chain is Lumenal; the sequence is SCPLTVKVTL…RNTYGETKGR (884 aa). EGF-like domains are found at residues 523-563, 664-708, and 712-764; these read VRDL…HLCV, PVRD…SGCY, and KGID…KSCL. 9 disulfides stabilise this stretch: C527-C539, C535-C546, C548-C562, C668-C681, C675-C692, C694-C707, C716-C728, C724-C748, and C750-C763. Residue N796 is glycosylated (N-linked (GlcNAc...) asparagine). Intrachain disulfides connect C838-C1000, C929-C990, and C996-C1003. A glycan (N-linked (GlcNAc...) asparagine) is linked at N1033. 5 cysteine pairs are disulfide-bonded: C1049/C1060, C1062/C1075, C1149/C1171, C1203/C1290, and C1311/C1334. The 123-residue stretch at 1079–1201 folds into the Fibronectin type-III domain; it reads PQPVLRLSPT…SELSTVTLRT (123 aa).

It belongs to the astrotactin family. As to quaternary structure, interacts with ASTN1; the interaction is not calcium-dependent. As to expression, detected in cerebellum granule neurons; not detected in astroglia (at protein level). Detected primarily in cerebellum, and at lower levels in brain cortex, olfactory bulb, hindbrain and hippocampus dentate gyrus. Between 6 and 10 days after birth, when granule cell migration occurs in the cerebellum, detected in granule cell precursors in the external germinal layer, the molecular layer, the internal granule layer and in Purkinje neurons. Detected in postmitotic neurons in adult cerebellum.

It localises to the membrane. The protein resides in the perikaryon. It is found in the cytoplasm. The protein localises to the cell cortex. Its subcellular location is the early endosome. It localises to the late endosome. The protein resides in the cytoplasmic vesicle. It is found in the clathrin-coated vesicle. Functionally, mediates recycling of the neuronal cell adhesion molecule ASTN1 to the anterior pole of the cell membrane in migrating neurons. Promotes ASTN1 internalization and intracellular transport of endocytosed ASTN1. Selectively binds inositol-4,5-bisphosphate, inositol-3,4,5-trisphosphate and inositol-1,3,4,5-tetrakisphosphate, suggesting it is recruited to membranes that contain lipids with a phosphoinositide headgroup. This Mus musculus (Mouse) protein is Astrotactin-2 (Astn2).